The chain runs to 597 residues: MAVDSLLQSGMASPTTSETEVKALKFIEEITRNPDSVQEKVLGEILSRNSNTEYLKRFDLNGAVDRKSFKSKVPVVIYEDLKTDIQRISNGDRSPILSSHPITEFLTSSGTSAGERKLMPTIEEDINRRQLLGNLLMPVMNLYVPGLDKGKGLYFLFVKSESTTSGGLPARPALTSYYKSDYFRTSDSDSVYTSPKEAILCCDSSQSMYTQMLCGLLMRHEVNRLGAVFPSGLLRAISFLQNNWKELSQDISTGTLSSKIFDHAIKTRMSNILNKPDQELAEFLIGVCSQENWEGIITKIWPNTKYLDVIVTGAMAEYIPMLEYYSGGLPMASMIYASSESYFGINLNPMCKPSEVSYTIFPNMAYFEFLPHNHDGDGGVEATSLVELADVEVGKEYELVITTYAGLYRYRVGDILRVTGFHNSAPQFKFIRRENVLLSIESDKTDEADLQKAVENASRLLAEQGTRVIEYTSYADTKTIPGHYVIYWELLSRDQSNALPSDEVMAKCCLEMEESLNAVYRQSRVSDKSIGPLEIRVVQNGTFEELMDFSISRGSSINQYKVPRCVSLTPIMKLLDSRVVSAHFSPSLPHWSPERRH.

Belongs to the IAA-amido conjugating enzyme family.

In terms of biological role, catalyzes the synthesis of indole-3-acetic acid (IAA)-amino acid conjugates, providing a mechanism for the plant to cope with the presence of excess auxin. Strongly reactive with Glu, Gln, Trp, Asp, Ala, Leu, Phe, Gly, Tyr, Met, Ile and Val. Little or no product formation with His, Ser, Thr, Arg, Lys, or Cys. Also active on pyruvic and butyric acid analogs of IAA, PAA and the synthetic auxin naphthaleneacetic acid (NAA). The two chlorinated synthetic auxin herbicides 2,4-D and 3,6-dichloro-o-anisic acid (dicamba) cannot be used as substrates. The polypeptide is Indole-3-acetic acid-amido synthetase GH3.4 (GH3.4) (Arabidopsis thaliana (Mouse-ear cress)).